The sequence spans 574 residues: FAD-linked oxidoreductase penH (574 aa).

A signal peptide spans 1–25; that stretch reads MLPRALTLSALLALLLAIYLALAPA. 5 N-linked (GlcNAc...) asparagine glycosylation sites follow: Asn-48, Asn-107, Asn-193, Asn-368, and Asn-385. The FAD-binding PCMH-type domain occupies 121–305; sequence HQGRIPLYAA…VRVTMRTYPD (185 aa).

It belongs to the oxygen-dependent FAD-linked oxidoreductase family. The cofactor is FAD.

The enzyme catalyses peniprequinolone + A = yaequinolone E + AH2. Its pathway is secondary metabolite biosynthesis. The protein operates within alkaloid biosynthesis. It functions in the pathway mycotoxin biosynthesis. In terms of biological role, FAD-linked oxidoreductase; part of the gene cluster that mediates the biosynthesis of penigequinolones, potent insecticidal alkaloids that contain a highly modified 10-carbon prenyl group. The first stage is catalyzed by the nonribosomal peptide synthetase penN that condenses anthranilic acid and O-methyl-L-tyrosine to produce 4'-methoxycyclopeptin. 4'-methoxycyclopeptin is then converted to 4'-methoxydehydrocyclopeptin by the ketoglutarate-dependent dioxygenase penM through dehydrogenation to form a double bond between C-alpha and C-beta of the O-methyltyrosine side chain. PenM also converts its first product methoxydehydrocyclopeptin to 4'-methoxycyclopenin. The following conversion of 4'methoxycyclopenin into 4'-methoxyviridicatin is catalyzed by the cyclopenase penL. 4'-methoxyviridicatin is the precursor of quinolone natural products, and is further converted to quinolinone B. The prenyltransferase penI then catalyzes the canonical Friedel-Crafts alkylation of quinolinone B with dimethylallyl cation to yield dimethylallyl quinolone, which is subjected to FAD-dependent dehydrogenation by the FAD-linked oxidoreductase penH to yield conjugated aryl diene. The delta(3') double bond then serves as the site of the second alkylation with DMAPP catalyzed by the prenyltransferase penG to yield a carbenium ion intermediate, which can be attacked by H(2)O to yield a styrenyl quinolone containing a C3'-hydroxyprenyl chain, or undergo cyclization to yield yaequinolones J1 and J2. The conversion of the styrenyl quinolone into the tetrahydrofuran-containing yaequinolone C is performed by the FAD-dependent monooxygenase penE and involves epoxidation of the terminal C7'-C8' olefin, followed by epoxide ring opening initiated by the C3' hydroxyl group. The predicted cysteine hydrolase penJ acts as an epoxide hydrolase that enhances the rate of the 5-exo-tet cyclization step, increasing the yield of yaequinolone C. PenF catalyzes the cationic rearrangement of the epoxide formed by penE (before ring opening to produce yaequinolone C) into yaequinolone D. Finally, the short-chain dehydrogenase/reductase (SDR)-like reductase penD, catalyzes both the dehydration of yaequinolone D and the reduction of the resulting oxonium to yield penigequinolone. The sequence is that of FAD-linked oxidoreductase penH from Penicillium thymicola.